Consider the following 630-residue polypeptide: Golgin subfamily A member 8K (630 aa).

Residues 1 to 76 (MAEETQHNKL…TSSATLKDLE (76 aa)) form a disordered region. Coiled-coil stretches lie at residues 86-148 (LDSR…LNTD) and 224-411 (LTQL…QQNQ). A compositionally biased stretch (basic and acidic residues) spans 352-362 (KQEERIQEQHK). 2 disordered regions span residues 352-379 (KQEE…EPNN) and 424-444 (GEGH…PMPS).

It belongs to the GOLGA8 family.

In Homo sapiens (Human), this protein is Golgin subfamily A member 8K.